The primary structure comprises 552 residues: Phosphoglucomutase (552 aa).

The active-site Phosphoserine intermediate is the S143. Mg(2+) contacts are provided by S143, D295, D297, and D299.

It belongs to the phosphohexose mutase family. Requires Mg(2+) as cofactor.

It carries out the reaction alpha-D-glucose 1-phosphate = alpha-D-glucose 6-phosphate. It functions in the pathway glycolipid metabolism; diglucosyl-diacylglycerol biosynthesis. Catalyzes the interconversion between glucose-6-phosphate and alpha-glucose-1-phosphate. This is the first step in the biosynthesis of diglucosyl-diacylglycerol (Glc2-DAG), i.e. the predominant glycolipid found in the S.aureus membrane, which is also used as a membrane anchor for lipoteichoic acid (LTA). This chain is Phosphoglucomutase (pgcA), found in Staphylococcus aureus (strain Mu50 / ATCC 700699).